A 323-amino-acid polypeptide reads, in one-letter code: Serine racemase (323 aa).

Residues serine 32, serine 33, and lysine 52 each contribute to the ATP site. The active-site Proton acceptor is the lysine 57. A Lysino-D-alanine (Lys); alternate modification is found at lysine 57. Lysine 57 is subject to N6-(pyridoxal phosphate)lysine; alternate. Threonine 79 contacts Ca(2+). The active-site Proton acceptor is the serine 82. Asparagine 84 is a pyridoxal 5'-phosphate binding site. ATP is bound by residues glutamine 87 and tyrosine 119. Aspartate 176 is a binding site for Mg(2+). Pyridoxal 5'-phosphate is bound by residues glycine 183, glycine 184, glycine 185, glycine 186, and leucine 187. Ca(2+) contacts are provided by glutamate 208, glycine 212, and aspartate 214. Positions 208, 212, and 214 each coordinate Mg(2+). Mn(2+)-binding residues include glutamate 208, glycine 212, and aspartate 214. Lysine 277 contributes to the ATP binding site. Serine 308 lines the pyridoxal 5'-phosphate pocket. Asparagine 311 is an ATP binding site.

Belongs to the serine/threonine dehydratase family. In terms of assembly, homodimer. Mg(2+) serves as cofactor. It depends on Mn(2+) as a cofactor. The cofactor is Ca(2+). Requires pyridoxal 5'-phosphate as cofactor. Modification of the active site Lys by its substrate Ser to lysino-D-alanine reduces but does not abolish enzyme activity.

It catalyses the reaction L-serine = D-serine. The catalysed reaction is L-serine = pyruvate + NH4(+). The enzyme catalyses D-serine = pyruvate + NH4(+). Its activity is regulated as follows. Allosterically activated by ATP, by magnesium, and possibly also by other divalent metal cations. In terms of biological role, catalyzes the synthesis of D-serine from L-serine. Has dehydratase activity towards both L-serine and D-serine. In Schizosaccharomyces pombe (strain 972 / ATCC 24843) (Fission yeast), this protein is Serine racemase.